The following is a 3898-amino-acid chain: Genome polyprotein (3898 aa).

One can recognise a Peptidase C53 domain in the interval 1 to 168; sequence MELNHFELLY…TDCPLWVTSC (168 aa). Catalysis depends on for N-terminal protease activity residues E22, H49, and C69. Residues 112–138 are zinc-binding TRASH domain; that stretch reads CEVTKRIGRVTGSDGKLYHIYVCIDGC. The N-linked (GlcNAc...) asparagine; by host glycan is linked to N157. Residues 221–242 form a disordered region; sequence KGKVKGKNTQDGLYHNKNKPPE. 3 N-linked (GlcNAc...) asparagine; by host glycosylation sites follow: N269, N278, and N332. 2 disulfides stabilise this stretch: C305–C349 and C335–C336. N-linked (GlcNAc...) asparagine; by host glycans are attached at residues N362 and N367. Disulfide bonds link C377–C422 and C381–C405. Residues N410, N425, N500, and N594 are each glycosylated (N-linked (GlcNAc...) asparagine; by host). C693 and C737 are disulfide-bonded. 5 N-linked (GlcNAc...) asparagine; by host glycosylation sites follow: N805, N810, N874, N918, and N949. The next 9 helical transmembrane spans lie at 1031–1051, 1070–1090, 1104–1124, 1140–1164, 1189–1209, 1217–1237, 1247–1267, 1281–1301, and 1360–1380; these read FIVL…LIVT, VVLI…YFLL, ILLL…VALL, QRLP…MLLA, LSTD…TYIS, LLQY…LKGV, LPSY…AVVT, VPTL…ILIL, and TMLP…WQFI. Positions 1441-1589 constitute a Peptidase C74 domain; the sequence is KELIIKHKVR…DLEHLGWVLR (149 aa). Active-site for cysteine protease NS2 activity residues include H1447, E1461, and C1512. A helical membrane pass occupies residues 1568–1588; the sequence is MLLVGNLGTEVGDLEHLGWVL. The 174-residue stretch at 1590–1763 folds into the Peptidase S31 domain; sequence GPAVCKKVTE…LPIFEASSGR (174 aa). Active-site charge relay system; for serine protease NS3 activity residues include H1658 and D1695. A glycan (N-linked (GlcNAc...) asparagine; by host) is linked at N1713. The active-site Charge relay system; for serine protease NS3 activity is the S1752. Residues 1802–1960 enclose the Helicase ATP-binding domain; the sequence is ITTMNRGEFR…QKHPIEEYIA (159 aa). 1815–1822 is an ATP binding site; that stretch reads LATGAGKT. The DEAH box motif lies at 1910–1913; it reads DEYH. The 202-residue stretch at 1978 to 2179 folds into the Helicase C-terminal domain; the sequence is GLKIPVEEMK…ELPMAVKNIM (202 aa). N2134, N2217, N2419, N2494, N2787, N2815, and N2891 each carry an N-linked (GlcNAc...) asparagine; by host glycan. The span at 2968–2980 shows a compositional bias: low complexity; sequence PTMTTGETPTTFT. Residues 2968–2987 are disordered; that stretch reads PTMTTGETPTTFTSSGPDPK. N-linked (GlcNAc...) asparagine; by host glycans are attached at residues N3103, N3211, and N3316. The GTP site is built by T3500 and L3502. The region spanning 3519-3642 is the RdRp catalytic domain; that stretch reads PVAVSFDTKA…ITERALGEKF (124 aa). N-linked (GlcNAc...) asparagine; by host glycosylation is present at N3689. R3697 is a binding site for GTP. N3698 is a glycosylation site (N-linked (GlcNAc...) asparagine; by host). GTP is bound at residue K3705. A glycan (N-linked (GlcNAc...) asparagine; by host) is linked at N3794.

Belongs to the pestivirus polyprotein family. As to quaternary structure, interacts (via N-terminus) with host SP1; this interaction induces proteasomal degradation of SP1 with subsequent down-regulation of HDAC1 and ISG15 expression thereby counteracting the host innate immunity. Interacts (via C-terminus) with host IRF3. Interacts with host OS9. In terms of assembly, homodimer; disulfide-linked. Interacts with host RPSA. As to quaternary structure, homodimer; disulfide-linked. Heterodimer with E1; disulfide-linked. Homodimer; disulfide-linked. Heterodimer with E1; disulfide-linked. Interacts with host TRX2. Interacts with host receptor ADAM17 (via metalloproteinase domain); this interaction allows binding and probably entry of the virus into the host cell. Interacts with host ANXA2; this interaction allows binding and probably entry of the virus into the host cell. Interacts with host MERTK; this interaction allows binding and probably entry of the virus into the host cell. In terms of assembly, interacts with host TRAF6; this interaction inhibits host NF-kappa-B pathway. Interacts with NS5B; this interaction enhances RNA-dependent RNA polymerase activity. Interacts with protein NS4A. As to quaternary structure, interacts with host RAB5, this interaction facilitates the formation of NS4B-related complex. Interacts with host FTH1; this interaction plays a positive role in viral anti-apoptosis. Interacts with RNA-directed RNA polymerase. Interacts with host RSAD2; this interaction inhibits viral replication. In terms of assembly, interacts with NS5A; this interaction promotes viral replication. Post-translationally, heavily glycosylated. The viral RNA of pestiviruses is expressed as a single polyprotein which undergoes post-translational proteolytic processing resulting in the production of at least eleven individual proteins. The N-terminal protease cleaves itself from the nascent polyprotein autocatalytically and thereby generates the N-terminus of the adjacent viral capsid protein C. In terms of processing, cleavage between E2 and p7 is partial.

It localises to the virion. Its subcellular location is the host membrane. It is found in the virion membrane. The protein resides in the host cell surface. The protein localises to the host cytoplasm. It catalyses the reaction Leu is conserved at position P1 for all four cleavage sites. Alanine is found at position P1' of the NS4A-NS4B cleavage site, whereas serine is found at position P1' of the NS3-NS4A, NS4B-NS5A and NS5A-NS5B cleavage sites.. It carries out the reaction RNA(n) + a ribonucleoside 5'-triphosphate = RNA(n+1) + diphosphate. The enzyme catalyses a ribonucleoside 5'-triphosphate + H2O = a ribonucleoside 5'-diphosphate + phosphate + H(+). The catalysed reaction is ATP + H2O = ADP + phosphate + H(+). In terms of biological role, leader cysteine autoprotease that cleaves itself from the nascent polyprotein during translation of the viral mRNA. Once released, plays a role in the inhibition of host innate immune response by interacting with host IRF3 and inducing its proteasomal degradation. Functionally, packages viral RNA to form a viral nucleocapsid and thereby protects viral RNA. Also plays a role in transcription regulation. Protects the incoming virus against IFN-induced effectors. Plays a role in viral entry. Interacts with host RPSA that acts as a cellular attachment receptor for the virus. Also possesses intrinsic ribonuclease (RNase) activity that can inhibit the production of type I interferon and assist in the development of persistent infections. Cleaves preferentially NpU bonds. Binds to heparan sulfate on the host cells for entry. Its function is as follows. Plays a role in cell attachment and subsequent fusion of viral and cellular membranes. Therefore, mediates together with envelope glycoprotein E2 the viral entry. In terms of biological role, plays a role in cell attachment and subsequent fusion of viral and cellular membranes. Therefore, mediates together with envelope glycoprotein E1 the viral entry. Binds to host ADAM17 receptor for entry. Binds to host ANXA2 for entry. Binds to host MERTK for entry. Functionally, plays an essential role in the virus replication cycle by acting as a viroporin. Forms ion conductive pores, which alters the cell permeability allowing the transport of ions and other small molecules. Autoprotease that associates with the host chaperone JIV and cleaves the NS2-3 protein between NS2 and NS3. Also plays a role in the formation of infectious particles. Its function is as follows. Plays a role in the regulation of viral RNA replication. In terms of biological role, multifunctional protein that contains an N-terminal protease and a C-terminal helicase, playing essential roles in viral polyprotein processing and viral genome replication. The chymotrypsin-like serine protease activity utilizes NS4A as an essential cofactor and catalyzes the cleavage of the polyprotein leading to the release of NS4A, NS4B, NS5A, and NS5B. Plays a role in the inhibition of host NF-kappa-B activation by interacting with and inhibiting host TRAF6. Interacts with NS5B to enhance RNA-dependent RNA polymerase activity. Functionally, acts as a cofactor for the NS3 protease activity. Induces a specific membrane alteration that serves as a scaffold for the virus replication complex. Antagonizes host cell apoptosis by interacting with host ferritin heavy chain. The ORF4 protein physically binds host FTH1/FHC, resulting in the reduction of FTH1 protein levels in host cells. Reduction of FTH1 concentration further inhibits the accumulation of reactive oxygen in host cells, leading to reduced apoptosis. Its function is as follows. Regulates viral RNA replication by interacting with the 3'-untranslated region of viral RNA in a dose-dependent manner. At small concentrations promotes viral synthesis by interacting with the polymerase NS5B while at large concentrations, inhibits replication. In terms of biological role, replicates the viral (+) and (-) genome. The protein is Genome polyprotein of Sus scrofa (Pig).